The sequence spans 291 residues: Asialoglycoprotein receptor 1 (291 aa).

The segment covering M1 to H19 has biased composition (basic and acidic residues). The tract at residues M1–P27 is disordered. Over M1–R40 the chain is Cytoplasmic. The Endocytosis signal signature appears at C5 to L8. S16 carries the post-translational modification Phosphoserine. The S-palmitoyl cysteine moiety is linked to residue C36. A helical; Signal-anchor for type II membrane protein membrane pass occupies residues L41–S61. Positions S61–L123 form a coiled coil. Topologically, residues Q62–L291 are extracellular. 2 N-linked (GlcNAc...) asparagine glycosylation sites follow: N79 and N147. 3 cysteine pairs are disulfide-bonded: C154-C165, C182-C277, and C255-C269. Residues H161–E278 form the C-type lectin domain. Ca(2+) is bound by residues V191, E197, D216, Q240, D242, D243, E253, D254, N265, D266, and E278. At S285 the chain carries Phosphoserine.

Interacts with LASS2. In terms of processing, phosphorylated on a cytoplasmic Ser residue.

It localises to the membrane. Its function is as follows. Mediates the endocytosis of plasma glycoproteins to which the terminal sialic acid residue on their complex carbohydrate moieties has been removed. The receptor recognizes terminal galactose and N-acetylgalactosamine units. After ligand binding to the receptor, the resulting complex is internalized and transported to a sorting organelle, where receptor and ligand are disassociated. The receptor then returns to the cell membrane surface. In Pongo abelii (Sumatran orangutan), this protein is Asialoglycoprotein receptor 1 (ASGR1).